Consider the following 317-residue polypeptide: Methionyl-tRNA formyltransferase (317 aa).

A (6S)-5,6,7,8-tetrahydrofolate-binding site is contributed by 112–115 (SLLP).

Belongs to the Fmt family.

It carries out the reaction L-methionyl-tRNA(fMet) + (6R)-10-formyltetrahydrofolate = N-formyl-L-methionyl-tRNA(fMet) + (6S)-5,6,7,8-tetrahydrofolate + H(+). In terms of biological role, attaches a formyl group to the free amino group of methionyl-tRNA(fMet). The formyl group appears to play a dual role in the initiator identity of N-formylmethionyl-tRNA by promoting its recognition by IF2 and preventing the misappropriation of this tRNA by the elongation apparatus. The protein is Methionyl-tRNA formyltransferase of Mycoplasma mycoides subsp. mycoides SC (strain CCUG 32753 / NCTC 10114 / PG1).